Reading from the N-terminus, the 185-residue chain is MSSFTIPSPSSFSLSNSYNQTSPHSFTLRNSRSNFEFHRLRLDVESRRRSTSLRSNCSTKGTDSGENENKSVLDAFFLGKALAEVINERIESTVGEVLSTIGKFQAEQQKQVQEIQEEVLERAKKAKERAARETMEEQGLVASKPVAITRNPDAVVVASVTSTSTVESKTIMVDVEESSSSSDED.

Residues 1–56 (MSSFTIPSPSSFSLSNSYNQTSPHSFTLRNSRSNFEFHRLRLDVESRRRSTSLRSN) constitute a chloroplast transit peptide. The tract at residues 48 to 67 (RRSTSLRSNCSTKGTDSGEN) is disordered. Residues 52–64 (SLRSNCSTKGTDS) show a composition bias toward polar residues. Positions 105–138 (QAEQQKQVQEIQEEVLERAKKAKERAARETMEEQ) form a coiled coil.

The protein localises to the plastid. The protein resides in the chloroplast. It is found in the plastoglobule. This is an uncharacterized protein from Arabidopsis thaliana (Mouse-ear cress).